Reading from the N-terminus, the 186-residue chain is TATA box-binding protein-like 1 (186 aa).

It belongs to the TBP family.

It is found in the cytoplasm. The protein localises to the nucleus. In terms of biological role, part of a specialized transcription system that mediates the transcription of most ribosomal proteins through the 5'-TCT-3' motif which is a core promoter element at these genes. Seems to also mediate the transcription of NF1. Does not bind the TATA box. Members of the TBP family are differentially required to regulate transcription and development during early embryogenesis. The polypeptide is TATA box-binding protein-like 1 (Danio rerio (Zebrafish)).